We begin with the raw amino-acid sequence, 252 residues long: Imidazole glycerol phosphate synthase subunit HisF (252 aa).

Residues D11 and D130 contribute to the active site.

This sequence belongs to the HisA/HisF family. As to quaternary structure, heterodimer of HisH and HisF.

The protein resides in the cytoplasm. It catalyses the reaction 5-[(5-phospho-1-deoxy-D-ribulos-1-ylimino)methylamino]-1-(5-phospho-beta-D-ribosyl)imidazole-4-carboxamide + L-glutamine = D-erythro-1-(imidazol-4-yl)glycerol 3-phosphate + 5-amino-1-(5-phospho-beta-D-ribosyl)imidazole-4-carboxamide + L-glutamate + H(+). It functions in the pathway amino-acid biosynthesis; L-histidine biosynthesis; L-histidine from 5-phospho-alpha-D-ribose 1-diphosphate: step 5/9. Functionally, IGPS catalyzes the conversion of PRFAR and glutamine to IGP, AICAR and glutamate. The HisF subunit catalyzes the cyclization activity that produces IGP and AICAR from PRFAR using the ammonia provided by the HisH subunit. In Acinetobacter baylyi (strain ATCC 33305 / BD413 / ADP1), this protein is Imidazole glycerol phosphate synthase subunit HisF.